Consider the following 266-residue polypeptide: Short-chain dehydrogenase/reductase atnB (266 aa).

Positions 13, 57, and 85 each coordinate NADP(+). Catalysis depends on proton donor residues Ser147 and Tyr166. Tyr166, Lys170, Val199, and Thr201 together coordinate NADP(+). The active-site Lowers pKa of active site Tyr is Lys170.

The protein belongs to the short-chain dehydrogenases/reductases (SDR) family.

It functions in the pathway secondary metabolite biosynthesis; terpenoid biosynthesis. Short-chain dehydrogenase/reductase; part of the gene cluster that mediates the biosynthesis of the meroterpenoids arthripenoids. The pathway begins with the HR-PKS atnH that catalyzes two chain-extension steps to form a reduced triketide, which then primes the SAT domain in the NR-PKS atnG to initiate three more cycles of extension to give a linear hexaketide corresponding to the polyketide part of arthripenoids. The FAD-dependent monooxygenase atnJ then performs an oxidative decarboxylation at C11 of the atnH/atnG product, via an electrophilic aromatic hydroxylation with concomitant ipso-decarboxylation. The membrane-bound polyprenyl transferase atnF then introduces a farnesyl group before the FAD-dependent monooxygenase atnK functions as the first epoxidase on terminal C12'-C13' olefin, followed by a second epoxidation on C7'-C8' catalyzed by atnA. The terpene cyclase/mutase atnI then initiates the sequential tricyclic ring formation through protonation of the terminal epoxide and catalyzes the regioselective and stereoselective 6/6/6-tricyclic ring formation. The cytochrome P450 monooxygenase atnM is responsible for hydroxylating both C1' and C10'. The next steps may involve ketoreduction and acetyl transfer by the ketoreductase atnB and the acetyltransferase atnC, and lead to the production of arthripenoid B, the final biosynthetic product of the atn cluster. The hydroquinone moiety in arthripenoid B is prone to undergo spontaneous oxidation to afford a benzoquinone compound, a key intermediate for generating structure diversity. For instance, addition of a cysteine followed by ring contraction gives arthripenoid A, tautomerization gives the main product arthripenoid C, addition of a molecular of water or amine affords arthripenoid D or E, respectively, and loss of one water forms arthripenoid F. The polypeptide is Short-chain dehydrogenase/reductase atnB (Arthrinium sp).